The sequence spans 338 residues: Formamidase (338 aa).

One can recognise a CN hydrolase domain in the interval 14 to 257 (VGIGLVQLQL…NEIITAEVRP (244 aa)). The active-site Proton acceptor is the Glu60. Catalysis depends on Lys129, which acts as the Proton donor. Catalysis depends on Cys162, which acts as the Nucleophile.

The protein belongs to the carbon-nitrogen hydrolase superfamily. Aliphatic amidase family.

It carries out the reaction formamide + H2O = formate + NH4(+). Its function is as follows. Is an aliphatic amidase with a restricted substrate specificity, as it only hydrolyzes formamide. This is Formamidase from Allorhizobium ampelinum (strain ATCC BAA-846 / DSM 112012 / S4) (Agrobacterium vitis (strain S4)).